Here is a 240-residue protein sequence, read N- to C-terminus: Sialidase 85-1.2 (240 aa).

Positions 127-142 (DDDDGGDDDDEEDSQE) are enriched in acidic residues. Disordered stretches follow at residues 127 to 158 (DDDD…GKKP) and 221 to 240 (HRGG…QRDA). Residues 144–155 (SSPKESSPEKIG) are compositionally biased toward basic and acidic residues.

This sequence belongs to the glycosyl hydrolase 33 family.

The enzyme catalyses Hydrolysis of alpha-(2-&gt;3)-, alpha-(2-&gt;6)-, alpha-(2-&gt;8)- glycosidic linkages of terminal sialic acid residues in oligosaccharides, glycoproteins, glycolipids, colominic acid and synthetic substrates.. Functionally, developmentally regulated neuraminidase implicated in parasite invasion of cells. May contribute to the pathology during T.cruzi infection by cleaving sialic acid from cells of the immune system. This chain is Sialidase 85-1.2 (SA85-1.2), found in Trypanosoma cruzi.